The sequence spans 558 residues: WW domain-containing adapter protein with coiled-coil (558 aa).

Disordered regions lie at residues 1-129 (MVMY…WSEH), 159-244 (QRQK…SPAP), and 321-461 (VAQQ…APGR). Over residues 22–32 (QPYQTLKYSSK) the composition is skewed to polar residues. 2 stretches are compositionally biased toward basic and acidic residues: residues 33-46 (SHPD…RDSN) and 56-70 (RRSD…DNTG). The segment covering 72–82 (GRAKAIHPHRG) has biased composition (basic residues). Residues 99-116 (NHSSLHSSNSHSNPNKSS) show a composition bias toward low complexity. The 34-residue stretch at 120 to 153 (FEPADDWSEHISSSGKKYYYNCRTEVSQWEKPKE) folds into the WW domain. Over residues 175 to 184 (PKDRDYRREA) the composition is skewed to basic and acidic residues. Over residues 188 to 200 (TPASYSSTKSSIA) the composition is skewed to polar residues. Over residues 204–217 (PSSLTPSSSSAAVS) the composition is skewed to low complexity. Polar residues-rich tracts occupy residues 223-234 (NSASSASGSTVP) and 321-378 (VAQQ…MTVK). Residues 402–431 (SPRTLQRQSSQRSPSPGPNHMGSNSSSSSN) show a composition bias toward low complexity. Gly residues predominate over residues 432 to 443 (NGGGGGGQGPGV). The stretch at 529-555 (QATLREQRILFLRQQIKELEKLKNQNS) forms a coiled coil.

It is found in the nucleus. Its function is as follows. Acts as a linker between gene transcription and histone H2B monoubiquitination at 'Lys-120' (H2BK120ub1). Positive regulator of amino acid starvation-induced autophagy. Positively regulates MTOR activity. May negatively regulate the ubiquitin proteasome pathway. This is WW domain-containing adapter protein with coiled-coil (waca) from Danio rerio (Zebrafish).